Here is a 468-residue protein sequence, read N- to C-terminus: Phosphoglucosamine mutase (468 aa).

Catalysis depends on Ser112, which acts as the Phosphoserine intermediate. Positions 112, 254, 256, and 258 each coordinate Mg(2+). At Ser112 the chain carries Phosphoserine.

The protein belongs to the phosphohexose mutase family. The cofactor is Mg(2+). In terms of processing, activated by phosphorylation.

It catalyses the reaction alpha-D-glucosamine 1-phosphate = D-glucosamine 6-phosphate. Its function is as follows. Catalyzes the conversion of glucosamine-6-phosphate to glucosamine-1-phosphate. This chain is Phosphoglucosamine mutase, found in Prochlorococcus marinus (strain MIT 9313).